We begin with the raw amino-acid sequence, 244 residues long: DNA repair protein RecO (244 aa).

Belongs to the RecO family.

In terms of biological role, involved in DNA repair and RecF pathway recombination. This is DNA repair protein RecO from Polynucleobacter necessarius subsp. necessarius (strain STIR1).